Reading from the N-terminus, the 222-residue chain is Kinetochore protein Spc25 (222 aa).

Residues 51–100 (RHQRKVGKLQKVIMERREELDKRVSFIEELDRELEATKLRSLAMKDRIKQ) adopt a coiled-coil conformation.

The protein belongs to the SPC25 family. Component of the Ndc80 complex, which is composed of Ndc80, Nuf2 and Spc25.

It localises to the nucleus. The protein resides in the chromosome. Its subcellular location is the centromere. The protein localises to the kinetochore. Functionally, acts as a component of the essential kinetochore-associated Ndc80 complex, which is required for chromosome segregation and spindle checkpoint activity during meiosis and mitosis. Required for kinetochore integrity and the organization of stable microtubule binding sites in the outer plate of the kinetochore. Participates in SAC signaling that responds specifically to disruptions in spindle microtubule dynamics. The NDC80 complex synergistically enhances the affinity of the SKA1 complex for microtubules and may allow the NDC80 complex to track depolymerizing microtubules. The polypeptide is Kinetochore protein Spc25 (Drosophila sechellia (Fruit fly)).